Here is a 486-residue protein sequence, read N- to C-terminus: MIRRVLPHGLGRGLLTRRPGTRRGGFSLDWDGKVSEIKKKIKSILPGTPCDVLPDTSHLPPEHSDVVVVGGGVLGLSVAYWLKQLENRRGGMRVLVVERDHTYSQASTGLSVGGICQQFSLPENIQLSLFSASFLRNINEYLAVTNAPPLDLQFNPSGYLLLASEKDAAAMESNVKVQKQEGAKVCLMSPDQLRNKFPWINTEGVALASYGMENEGWFDPWCLLHGLRQKLMSMGVFFCQGEVTRFVTSSQRMMTTDDEMVTLKSIHEVHVKMDHSLEYQPVECAIVINAAGAWSAQIAALAGIGKGPPGTLQGTKLPVEPRKRYVYVWHCPQGPGLETPLVADTSGAYFRREGLGSNYLGGRSPAEEEEPDPANLEVDHDFFQEKVWPHLALRVPAFETLKVQTAWAGYYDYNTFDQNGVVGPHPLVVNMYFATGFSGHGLQQAPGVGRAVAEMILEGSFQTIDLSPFLFNRFYLGEKTQENNIM.

Residues 66–86 form a helical membrane-spanning segment; the sequence is VVVVGGGVLGLSVAYWLKQLE.

As to quaternary structure, associates with components of the mitochondrial respiratory chain complex I. Requires FAD as cofactor.

Its subcellular location is the mitochondrion inner membrane. In terms of biological role, required for the assembly of the mitochondrial membrane respiratory chain NADH dehydrogenase (Complex I). Involved in mid-late stages of complex I assembly. The sequence is that of FAD-dependent oxidoreductase domain-containing protein 1 (FOXRED1) from Macaca fascicularis (Crab-eating macaque).